We begin with the raw amino-acid sequence, 445 residues long: 3-dehydroquinate synthase, chloroplastic (445 aa).

The N-terminal 68 residues, 1-68, are a transit peptide targeting the chloroplast; sequence MAAFSLSAKQ…RASASSTAPV (68 aa). Residues N122, 153–155, K158, 186–191, 211–212, K224, K233, and 251–254 each bind NAD(+); these read DGE, GGVIGD, TT, and TLNT. E266 contacts a divalent metal cation. Position 308 (K308) interacts with NAD(+). Residues H329 and H346 each coordinate a divalent metal cation.

Belongs to the sugar phosphate cyclases superfamily. Dehydroquinate synthase family. As to quaternary structure, homodimer. Requires a divalent metal cation as cofactor. The cofactor is NAD(+).

Its subcellular location is the plastid. It localises to the chloroplast. It carries out the reaction 7-phospho-2-dehydro-3-deoxy-D-arabino-heptonate = 3-dehydroquinate + phosphate. Its pathway is metabolic intermediate biosynthesis; chorismate biosynthesis; chorismate from D-erythrose 4-phosphate and phosphoenolpyruvate: step 2/7. Catalyzes the second step in the shikimate pathway. In Actinidia chinensis var. chinensis (Chinese soft-hair kiwi), this protein is 3-dehydroquinate synthase, chloroplastic (DHQS).